A 249-amino-acid polypeptide reads, in one-letter code: ATP synthase subunit a, chloroplastic (249 aa).

5 consecutive transmembrane segments (helical) span residues 40–60 (QVLITSWVVIAILLGSAVLAI), 97–117 (VPFIGTLFLFIFVSNWSGALL), 136–156 (INTTVALALLTSVAYFYAGLS), 201–221 (LVVVVLVSLVPLVVPIPVMFL), and 222–242 (GLFTSGIQALIFATLAAAYIG).

The protein belongs to the ATPase A chain family. F-type ATPases have 2 components, CF(1) - the catalytic core - and CF(0) - the membrane proton channel. CF(1) has five subunits: alpha(3), beta(3), gamma(1), delta(1), epsilon(1). CF(0) has four main subunits: a, b, b' and c.

It is found in the plastid. The protein localises to the chloroplast thylakoid membrane. Functionally, key component of the proton channel; it plays a direct role in the translocation of protons across the membrane. The polypeptide is ATP synthase subunit a, chloroplastic (Lepidium virginicum (Virginia pepperweed)).